A 122-amino-acid chain; its full sequence is Large ribosomal subunit protein uL14 (122 aa).

The protein belongs to the universal ribosomal protein uL14 family. In terms of assembly, part of the 50S ribosomal subunit. Forms a cluster with proteins L3 and L19. In the 70S ribosome, L14 and L19 interact and together make contacts with the 16S rRNA in bridges B5 and B8.

Its function is as follows. Binds to 23S rRNA. Forms part of two intersubunit bridges in the 70S ribosome. This chain is Large ribosomal subunit protein uL14, found in Clostridium perfringens (strain ATCC 13124 / DSM 756 / JCM 1290 / NCIMB 6125 / NCTC 8237 / Type A).